Reading from the N-terminus, the 339-residue chain is Adenosine deaminase (339 aa).

Positions 15 and 17 each coordinate Zn(2+). Positions 17, 19, and 172 each coordinate substrate. Histidine 199 provides a ligand contact to Zn(2+). Glutamate 202 acts as the Proton donor in catalysis. Aspartate 279 is a binding site for Zn(2+).

Belongs to the metallo-dependent hydrolases superfamily. Adenosine and AMP deaminases family. Adenosine deaminase subfamily. Zn(2+) is required as a cofactor.

The catalysed reaction is adenosine + H2O + H(+) = inosine + NH4(+). It catalyses the reaction 2'-deoxyadenosine + H2O + H(+) = 2'-deoxyinosine + NH4(+). Functionally, catalyzes the hydrolytic deamination of adenosine and 2-deoxyadenosine. The protein is Adenosine deaminase of Lacticaseibacillus casei (strain BL23) (Lactobacillus casei).